The chain runs to 811 residues: Receptor-like protein 46 (811 aa).

The first 21 residues, 1–21 (MSKQCLLSCFLFFCFFIPQLS), serve as a signal peptide directing secretion. The Extracellular portion of the chain corresponds to 22 to 782 (FSCPQDQRQS…EEEDKEEEET (761 aa)). N-linked (GlcNAc...) asparagine glycans are attached at residues N46, N71, N128, and N143. 24 LRR repeats span residues 104 to 128 (INSLVGLDVSFNNIQGEIPGYAFVN), 129 to 153 (LTSLISLDMCCNRFNGSIPHELFSL), 155 to 177 (NLQRLDLSRNVIGGTLSGDIKEL), 178 to 201 (KNLQELILDENLIGGAIPSEIGSL), 203 to 225 (ELLTLTLRQNMFNSSIPSSVSRL), 226 to 249 (TKLKTIDLQNNFLSSKIPDDIGNL), 251 to 273 (NLSTLSLSMNKLSGGIPSSIHNL), 275 to 298 (NLETLQLENNNGLSGEIPAAWLFG), 299 to 322 (LQKLKVLRLEGNNKLQWNNNGYVF), 324 to 348 (QFKLTHLSLRSCGLEGNIPDWLKNQ), 349 to 369 (TALVYLDLSINRLEGRFPKWL), 370 to 395 (ADLKIRNITLSDNRLTGSLPPNLFQR), 397 to 419 (SLYYLVLSRNNFSGQIPDTIGES), 421 to 442 (VMVLMLSENNFSGSVPKSITKI), 443 to 466 (PFLKLLDLSKNRLSGEFPRFRPES), 468 to 488 (LEWLDISSNEFSGDVPAYFGG), 490 to 510 (TSMLLMSQNNFSGEFPQNFRN), 511 to 534 (LSYLIRLDLHDNKISGTVASLISQ), 536 to 560 (SSSVEVLSLRNNSLKGSIPEGISNL), 561 to 583 (TSLKVLDLSENNLDGYLPSSLGN), 643 to 665 (LYTLLDLSKNKLHGEIPTSLGNL), 666 to 688 (KSLKVLNLSNNEFSGLIPQSFGD), 690 to 713 (EKVESLDLSHNNLTGEIPKTLSKL), and 714 to 738 (SELNTLDLRNNKLKGRIPESPQLDR). The N-linked (GlcNAc...) asparagine glycan is linked to N215. N-linked (GlcNAc...) asparagine glycosylation occurs at N251. N-linked (GlcNAc...) asparagine glycosylation occurs at N347. 3 N-linked (GlcNAc...) asparagine glycosylation sites follow: N376, N407, and N430. N-linked (GlcNAc...) asparagine glycans are attached at residues N499 and N510. 3 N-linked (GlcNAc...) asparagine glycosylation sites follow: N546, N559, and N583. N672 and N701 each carry an N-linked (GlcNAc...) asparagine glycan. A glycan (N-linked (GlcNAc...) asparagine) is linked at N747. A helical membrane pass occupies residues 783–803 (IFSWNAAAIGCSCGFLIAVVF). The Cytoplasmic portion of the chain corresponds to 804–811 (MSYNELWK).

This sequence belongs to the RLP family.

It is found in the cell membrane. The polypeptide is Receptor-like protein 46 (Arabidopsis thaliana (Mouse-ear cress)).